The chain runs to 328 residues: V-type sodium ATPase subunit C (328 aa).

Belongs to the V-ATPase V0D/AC39 subunit family.

Functionally, involved in ATP-driven sodium extrusion. This is V-type sodium ATPase subunit C (ntpC) from Enterococcus hirae (strain ATCC 9790 / DSM 20160 / JCM 8729 / LMG 6399 / NBRC 3181 / NCIMB 6459 / NCDO 1258 / NCTC 12367 / WDCM 00089 / R).